The chain runs to 235 residues: Small ribosomal subunit protein uS2 (235 aa).

This sequence belongs to the universal ribosomal protein uS2 family.

The chain is Small ribosomal subunit protein uS2 (rpsB) from Geobacillus stearothermophilus (Bacillus stearothermophilus).